Here is a 369-residue protein sequence, read N- to C-terminus: DNA replication and repair protein RecF (369 aa).

30 to 37 (GENAQGKT) serves as a coordination point for ATP.

Belongs to the RecF family.

Its subcellular location is the cytoplasm. Functionally, the RecF protein is involved in DNA metabolism; it is required for DNA replication and normal SOS inducibility. RecF binds preferentially to single-stranded, linear DNA. It also seems to bind ATP. The polypeptide is DNA replication and repair protein RecF (Oceanobacillus iheyensis (strain DSM 14371 / CIP 107618 / JCM 11309 / KCTC 3954 / HTE831)).